A 162-amino-acid chain; its full sequence is Transcription elongation factor GreA (162 aa).

A coiled-coil region spans residues 44-72; sequence ENAEYHAAKEKQSHIERRIAELSDILSRA.

The protein belongs to the GreA/GreB family.

Necessary for efficient RNA polymerase transcription elongation past template-encoded arresting sites. The arresting sites in DNA have the property of trapping a certain fraction of elongating RNA polymerases that pass through, resulting in locked ternary complexes. Cleavage of the nascent transcript by cleavage factors such as GreA or GreB allows the resumption of elongation from the new 3'terminus. GreA releases sequences of 2 to 3 nucleotides. The chain is Transcription elongation factor GreA from Nautilia profundicola (strain ATCC BAA-1463 / DSM 18972 / AmH).